A 181-amino-acid chain; its full sequence is ATP synthase subunit b (181 aa).

A helical membrane pass occupies residues 23–43; that stretch reads FIHIPTFIYTALNLVILYFIL.

This sequence belongs to the ATPase B chain family. In terms of assembly, F-type ATPases have 2 components, F(1) - the catalytic core - and F(0) - the membrane proton channel. F(1) has five subunits: alpha(3), beta(3), gamma(1), delta(1), epsilon(1). F(0) has three main subunits: a(1), b(2) and c(10-14). The alpha and beta chains form an alternating ring which encloses part of the gamma chain. F(1) is attached to F(0) by a central stalk formed by the gamma and epsilon chains, while a peripheral stalk is formed by the delta and b chains.

The protein localises to the cell membrane. In terms of biological role, f(1)F(0) ATP synthase produces ATP from ADP in the presence of a proton or sodium gradient. F-type ATPases consist of two structural domains, F(1) containing the extramembraneous catalytic core and F(0) containing the membrane proton channel, linked together by a central stalk and a peripheral stalk. During catalysis, ATP synthesis in the catalytic domain of F(1) is coupled via a rotary mechanism of the central stalk subunits to proton translocation. Functionally, component of the F(0) channel, it forms part of the peripheral stalk, linking F(1) to F(0). This is ATP synthase subunit b from Acetivibrio thermocellus (strain ATCC 27405 / DSM 1237 / JCM 9322 / NBRC 103400 / NCIMB 10682 / NRRL B-4536 / VPI 7372) (Clostridium thermocellum).